The primary structure comprises 938 residues: Isoleucine--tRNA ligase (938 aa).

The 'HIGH' region motif lies at 58 to 68 (PYANGNIHIGH). E561 is an L-isoleucyl-5'-AMP binding site. Residues 602–606 (KMSKS) carry the 'KMSKS' region motif. K605 is an ATP binding site. Positions 901, 904, 921, and 924 each coordinate Zn(2+).

This sequence belongs to the class-I aminoacyl-tRNA synthetase family. IleS type 1 subfamily. In terms of assembly, monomer. Zn(2+) serves as cofactor.

It is found in the cytoplasm. The enzyme catalyses tRNA(Ile) + L-isoleucine + ATP = L-isoleucyl-tRNA(Ile) + AMP + diphosphate. Functionally, catalyzes the attachment of isoleucine to tRNA(Ile). As IleRS can inadvertently accommodate and process structurally similar amino acids such as valine, to avoid such errors it has two additional distinct tRNA(Ile)-dependent editing activities. One activity is designated as 'pretransfer' editing and involves the hydrolysis of activated Val-AMP. The other activity is designated 'posttransfer' editing and involves deacylation of mischarged Val-tRNA(Ile). The sequence is that of Isoleucine--tRNA ligase from Yersinia pseudotuberculosis serotype O:1b (strain IP 31758).